We begin with the raw amino-acid sequence, 479 residues long: Cysteine--tRNA ligase (479 aa).

A Zn(2+)-binding site is contributed by C29. The 'HIGH' region motif lies at 31 to 41 (ATVQGAPHIGH). The segment at 171–197 (QRVEDMQDAPDADPRGKRDPRDFALWK) is disordered. Residues 182–197 (ADPRGKRDPRDFALWK) are compositionally biased toward basic and acidic residues. Residues C224, H249, and E253 each coordinate Zn(2+). Positions 280-284 (KMSKS) match the 'KMSKS' region motif. An ATP-binding site is contributed by K283.

Belongs to the class-I aminoacyl-tRNA synthetase family. As to quaternary structure, monomer. It depends on Zn(2+) as a cofactor.

The protein localises to the cytoplasm. The catalysed reaction is tRNA(Cys) + L-cysteine + ATP = L-cysteinyl-tRNA(Cys) + AMP + diphosphate. This chain is Cysteine--tRNA ligase, found in Kocuria rhizophila (strain ATCC 9341 / DSM 348 / NBRC 103217 / DC2201).